The sequence spans 537 residues: Efflux pump ustT (537 aa).

Basic and acidic residues predominate over residues 1–25 (MAKEAQSLHELDNMKEKEVDQEKKA). A disordered region spans residues 1–50 (MAKEAQSLHELDNMKEKEVDQEKKAPTSVGDQEEHDDPKKQASHSQNVSE). Residue N47 is glycosylated (N-linked (GlcNAc...) asparagine). A run of 8 helical transmembrane segments spans residues 71-91 (PLAM…VSLL), 104-124 (WVYM…AGAM), 137-157 (GIGL…NAPL), 162-182 (MFLG…PLIG), 193-213 (WCFI…FFFV), 236-256 (LGSA…QWAG), 266-286 (IILL…SQML), and 304-324 (FGSF…TYWI). Residue N333 is glycosylated (N-linked (GlcNAc...) asparagine). A run of 4 helical transmembrane segments spans residues 339-359 (AGIR…MGGG), 363-383 (LIGY…VGAG), 397-417 (WIGY…QASL), and 430-450 (TAIS…VCIG). N-linked (GlcNAc...) asparagine glycosylation is present at N501. Residues 507-527 (TFYVALAAGITSMLSAFLVQW) traverse the membrane as a helical segment.

It belongs to the major facilitator superfamily. TCR/Tet family.

The protein resides in the cell membrane. Its function is as follows. Efflux pump; part of the gene cluster that mediates the biosynthesis of ustilaginoidins, dimeric gamma-naphthopyrones isolated from different fungal species. This Ustilaginoidea virens (Rice false smut fungus) protein is Efflux pump ustT.